Here is a 78-residue protein sequence, read N- to C-terminus: Large ribosomal subunit protein bL28 (78 aa).

Belongs to the bacterial ribosomal protein bL28 family.

The chain is Large ribosomal subunit protein bL28 from Rippkaea orientalis (strain PCC 8801 / RF-1) (Cyanothece sp. (strain PCC 8801)).